A 327-amino-acid chain; its full sequence is ABC transporter periplasmic-binding protein YphF (327 aa).

A signal peptide spans 1 to 26 (MPTKMRTTRNLLLMATLLGSALFARA).

This sequence belongs to the bacterial solute-binding protein 2 family.

The protein resides in the periplasm. Its function is as follows. Probably part of the binding-protein-dependent transport system YphDEF. This is ABC transporter periplasmic-binding protein YphF (yphF) from Escherichia coli (strain K12).